The sequence spans 248 residues: MEDTVIVGRHAVREAIITGHPINKILIQEGIKKQQINEILKNAKDQKIIVQTVPKSKLDFLANAPHQGVAALIAPYEYADFDQFLKQQKEKEGLSTVLILDGLEDPHNLGSILRTADATGVDGVIIPKRRSVTLTQTVAKASTGAIEHVPVIRVTNLAKTIDELKDNGFWVAGTEANNATDYRNLEADMSLAIVIGSEGQGMSRLVSDKCDFYIKIPMVGHVNSLNASVAASLMMYEVFRKRHDVGEI.

The S-adenosyl-L-methionine site is built by Gly-196, Ile-216, and Leu-225.

This sequence belongs to the class IV-like SAM-binding methyltransferase superfamily. RNA methyltransferase TrmH family.

This is Putative TrmH family tRNA/rRNA methyltransferase from Staphylococcus aureus (strain Mu50 / ATCC 700699).